The sequence spans 120 residues: Cell cycle protein GpsB (120 aa).

Positions 32–68 (LDDIIKDYETYAALVKELREENRRLKEELAAKPVEKA) form a coiled coil. The segment at 63 to 88 (KPVEKAPVQPTQPVQSTQATQSTVES) is disordered. Low complexity predominate over residues 68 to 86 (APVQPTQPVQSTQATQSTV).

This sequence belongs to the GpsB family. As to quaternary structure, forms polymers through the coiled coil domains. Interacts with PBP1, MreC and EzrA.

It is found in the cytoplasm. Functionally, divisome component that associates with the complex late in its assembly, after the Z-ring is formed, and is dependent on DivIC and PBP2B for its recruitment to the divisome. Together with EzrA, is a key component of the system that regulates PBP1 localization during cell cycle progression. Its main role could be the removal of PBP1 from the cell pole after pole maturation is completed. Also contributes to the recruitment of PBP1 to the division complex. Not essential for septum formation. The polypeptide is Cell cycle protein GpsB (Streptococcus sanguinis (strain SK36)).